A 388-amino-acid polypeptide reads, in one-letter code: MNLRKMTELNITGKKILIRTDLNVPIKNGVIQSDARILAALPTIEIAIEKKAKIIILSHLGRPKEGCYTKKYSLFPIFEYLKKKLKKTKIYFSDNHLKKVEINSGEILILENVRFNVGELKNDENLSKEYANLCDIFVMDAFGSAHRMQSSTYGIGKFVKIACAGPLLISEINNLKKALKNPKRPMVAIVGGAKVSTKFNVLNKLAAISDTIIVGGGIANTFLAIDNKIGKSLHEPKFILKAKKLRDKYNNIVIPIDSRVGKNFSHKEKCTIKLSSNIEKNEEIMDLGDKTIKKIIKILKKSKTILWNGPVGVFEFPNFRKGTEMIAKAIAENNGFSIAGGGDTLSVIDMFQIKDKISYISTGGGAFLEFIEGKKLPAMKMLEENFHK.

Substrate-binding positions include 21-23 (DLN), arginine 36, 59-62 (HLGR), arginine 114, and arginine 147. ATP is bound by residues lysine 198, glutamate 315, and 341 to 344 (GGDT).

The protein belongs to the phosphoglycerate kinase family. Monomer.

The protein localises to the cytoplasm. It catalyses the reaction (2R)-3-phosphoglycerate + ATP = (2R)-3-phospho-glyceroyl phosphate + ADP. It participates in carbohydrate degradation; glycolysis; pyruvate from D-glyceraldehyde 3-phosphate: step 2/5. In Buchnera aphidicola subsp. Schizaphis graminum (strain Sg), this protein is Phosphoglycerate kinase.